The sequence spans 510 residues: Aspartate kinase FUB3 (510 aa).

ACT domains lie at 372–440 and 446–510; these read ILSN…VLPD and LVGA…KNAI.

It belongs to the aspartokinase family.

The catalysed reaction is L-aspartate + ATP = 4-phospho-L-aspartate + ADP. The protein operates within mycotoxin biosynthesis. Its function is as follows. Aspartate kinase; part of the gene cluster that mediates the biosynthesis of fusaric acid, a mycotoxin with low to moderate toxicity to animals and humans, but with high phytotoxic properties. L-aspartate is suggested as fusaric acid amino acid precursor that is activated and further processed to O-acetyl-L-homoserine by cluster enzymes aspartate kinase FUB3 and homoserine O-acetyltransferase FUB5, as well as enzymes of the primary metabolism. The polyketide synthase (PKS) FUB1 generates the triketide trans-2-hexenal which is presumptively released by the hydrolase FUB4 and linked to the NRPS-bound amino acid precursor by NAD(P)-dependent dehydrogenase FUB6. FUB1, FUB4, and the non-canonical NRPS Fub8 may form an enzyme complex. Further processing of the NRPS-bound intermediate might be carried out by FUB6 and the sulfhydrylase FUB7, enabling a spontaneous electrocyclization to close the carbon backbone of fusaric acid. Dihydrofusaric acid is likely to be released via reduction by the thioester reductase (TR) domain of FUB8 whereupon the final oxidation to fusaric acid may (also) be performed by the FMN-dependent dehydrogenase FUB9. The protein is Aspartate kinase FUB3 of Gibberella fujikuroi (strain CBS 195.34 / IMI 58289 / NRRL A-6831) (Bakanae and foot rot disease fungus).